A 968-amino-acid polypeptide reads, in one-letter code: RNA polymerase-associated protein RapA (968 aa).

In terms of domain architecture, Helicase ATP-binding spans 163 to 332; sequence EVGRRYAPRV…FARLRLLDPD (170 aa). 176-183 contacts ATP; that stretch reads DEVGLGKT. The DEAH box motif lies at 278-281; it reads DEAH. A Helicase C-terminal domain is found at 491-643; that stretch reads RVDWLIAFLK…ELTCPSGHVL (153 aa).

This sequence belongs to the SNF2/RAD54 helicase family. RapA subfamily. In terms of assembly, interacts with the RNAP. Has a higher affinity for the core RNAP than for the holoenzyme. Its ATPase activity is stimulated by binding to RNAP.

In terms of biological role, transcription regulator that activates transcription by stimulating RNA polymerase (RNAP) recycling in case of stress conditions such as supercoiled DNA or high salt concentrations. Probably acts by releasing the RNAP, when it is trapped or immobilized on tightly supercoiled DNA. Does not activate transcription on linear DNA. Probably not involved in DNA repair. This Shewanella sp. (strain W3-18-1) protein is RNA polymerase-associated protein RapA.